Consider the following 644-residue polypeptide: Protein cueball (644 aa).

The N-terminal stretch at 1–26 (MIRIRFGMDVLLVVLLATCLLTPAHG) is a signal peptide. At 27-531 (TPLEWDFAVT…VCLTPRVWTS (505 aa)) the chain is on the extracellular side. 2 N-linked (GlcNAc...) asparagine glycosylation sites follow: Asn-82 and Asn-108. LDL-receptor class B repeat units lie at residues 121-166 (MNLF…DVCR), 167-211 (RKLY…DQLS), and 212-257 (DRLF…TNDA). N-linked (GlcNAc...) asparagine glycosylation is found at Asn-175 and Asn-190. N-linked (GlcNAc...) asparagine glycosylation is present at Asn-313. EGF-like domains lie at 398–430 (EIRE…FTGE) and 433–471 (ELSV…ARCE). Disulfide bonds link Cys-402/Cys-411, Cys-406/Cys-421, Cys-437/Cys-447, Cys-441/Cys-459, and Cys-461/Cys-470. N-linked (GlcNAc...) asparagine glycosylation is found at Asn-473 and Asn-508. Residues 532 to 552 (SVIIILVVGIVSSLLLVAVIV) traverse the membrane as a helical segment. Over 553-644 (HGIRRLYKPK…LIHNMEDDLY (92 aa)) the chain is Cytoplasmic.

This sequence belongs to the cueball family.

Its subcellular location is the cell membrane. Its function is as follows. Has a role in spermatogenesis and oogenesis. The sequence is that of Protein cueball from Drosophila simulans (Fruit fly).